The following is a 548-amino-acid chain: ATP synthase subunit alpha (548 aa).

172 to 179 is a binding site for ATP; it reads GDRKTGKT. The disordered stretch occupies residues 526–548; that stretch reads AEAMDEADVEKESVKVRKPAPKK.

The protein belongs to the ATPase alpha/beta chains family. In terms of assembly, F-type ATPases have 2 components, CF(1) - the catalytic core - and CF(0) - the membrane proton channel. CF(1) has five subunits: alpha(3), beta(3), gamma(1), delta(1), epsilon(1). CF(0) has three main subunits: a(1), b(2) and c(9-12). The alpha and beta chains form an alternating ring which encloses part of the gamma chain. CF(1) is attached to CF(0) by a central stalk formed by the gamma and epsilon chains, while a peripheral stalk is formed by the delta and b chains.

The protein resides in the cell membrane. The enzyme catalyses ATP + H2O + 4 H(+)(in) = ADP + phosphate + 5 H(+)(out). In terms of biological role, produces ATP from ADP in the presence of a proton gradient across the membrane. The alpha chain is a regulatory subunit. This is ATP synthase subunit alpha from Mycolicibacterium gilvum (strain PYR-GCK) (Mycobacterium gilvum (strain PYR-GCK)).